A 157-amino-acid polypeptide reads, in one-letter code: Trafficking protein particle complex subunit 6b (157 aa).

It belongs to the TRAPP small subunits family. BET3 subfamily. In terms of assembly, homodimer. Part of a TRAPP complex.

The protein resides in the golgi apparatus. It localises to the cis-Golgi network. The protein localises to the endoplasmic reticulum. Functionally, component of a transport protein particle (TRAPP) complex that may function in specific stages of inter-organelle traffic. Specifically involved in the early development of neural circuitry, likely by controlling the frequency and amplitude of intracellular calcium transients implicated in the regulation of neuron differentiation and survival. In Danio rerio (Zebrafish), this protein is Trafficking protein particle complex subunit 6b.